Reading from the N-terminus, the 433-residue chain is ATP-dependent protease ATPase subunit HslU (433 aa).

ATP-binding positions include valine 18, 60–65 (GVGKTE), aspartate 246, glutamate 311, and arginine 383.

It belongs to the ClpX chaperone family. HslU subfamily. A double ring-shaped homohexamer of HslV is capped on each side by a ring-shaped HslU homohexamer. The assembly of the HslU/HslV complex is dependent on binding of ATP.

It localises to the cytoplasm. Functionally, ATPase subunit of a proteasome-like degradation complex; this subunit has chaperone activity. The binding of ATP and its subsequent hydrolysis by HslU are essential for unfolding of protein substrates subsequently hydrolyzed by HslV. HslU recognizes the N-terminal part of its protein substrates and unfolds these before they are guided to HslV for hydrolysis. The sequence is that of ATP-dependent protease ATPase subunit HslU from Rhodopseudomonas palustris (strain ATCC BAA-98 / CGA009).